Consider the following 37-residue polypeptide: ADLAHRQQSVNRLLYKIYSPISSAYAELKQLSTDNXD.

It belongs to the tyrosinase family. Hemocyanin subfamily. As to expression, hemolymph.

Its subcellular location is the secreted. The protein resides in the extracellular space. Its function is as follows. Hemocyanins are copper-containing oxygen carriers occurring freely dissolved in the hemolymph of many mollusks and arthropods. The protein is Hemocyanin subunit B of Cancer pagurus (Rock crab).